A 501-amino-acid chain; its full sequence is Probable cytosol aminopeptidase (501 aa).

The Mn(2+) site is built by Lys-268 and Asp-273. Residue Lys-280 is part of the active site. Residues Asp-291, Asp-350, and Glu-352 each coordinate Mn(2+). Residue Arg-354 is part of the active site.

The protein belongs to the peptidase M17 family. It depends on Mn(2+) as a cofactor.

It localises to the cytoplasm. The enzyme catalyses Release of an N-terminal amino acid, Xaa-|-Yaa-, in which Xaa is preferably Leu, but may be other amino acids including Pro although not Arg or Lys, and Yaa may be Pro. Amino acid amides and methyl esters are also readily hydrolyzed, but rates on arylamides are exceedingly low.. The catalysed reaction is Release of an N-terminal amino acid, preferentially leucine, but not glutamic or aspartic acids.. In terms of biological role, presumably involved in the processing and regular turnover of intracellular proteins. Catalyzes the removal of unsubstituted N-terminal amino acids from various peptides. This is Probable cytosol aminopeptidase from Idiomarina loihiensis (strain ATCC BAA-735 / DSM 15497 / L2-TR).